A 140-amino-acid polypeptide reads, in one-letter code: Nucleoside diphosphate kinase (140 aa).

ATP-binding residues include Lys11, Phe59, Arg87, Thr93, Arg104, and Asn114. His117 acts as the Pros-phosphohistidine intermediate in catalysis.

This sequence belongs to the NDK family. In terms of assembly, homotetramer. The cofactor is Mg(2+).

The protein localises to the cytoplasm. It catalyses the reaction a 2'-deoxyribonucleoside 5'-diphosphate + ATP = a 2'-deoxyribonucleoside 5'-triphosphate + ADP. The catalysed reaction is a ribonucleoside 5'-diphosphate + ATP = a ribonucleoside 5'-triphosphate + ADP. Major role in the synthesis of nucleoside triphosphates other than ATP. The ATP gamma phosphate is transferred to the NDP beta phosphate via a ping-pong mechanism, using a phosphorylated active-site intermediate. This Xanthobacter autotrophicus (strain ATCC BAA-1158 / Py2) protein is Nucleoside diphosphate kinase.